The sequence spans 410 residues: Phospho-N-acetylmuramoyl-pentapeptide-transferase (410 aa).

A run of 10 helical transmembrane segments spans residues 27 to 47 (RMIL…PYFI), 77 to 97 (TPTM…VLWM), 99 to 119 (LTHI…LIGG), 140 to 160 (LFFQ…SSVN), 213 to 233 (PVVT…FFVI), 248 to 268 (GLLA…AFVS), 288 to 308 (IAIY…YNGY), 312 to 332 (VFMG…SAVL), 337 to 357 (FLLG…ILQV), and 389 to 409 (VIRF…SLKF).

It belongs to the glycosyltransferase 4 family. MraY subfamily. It depends on Mg(2+) as a cofactor.

The protein localises to the cell inner membrane. It carries out the reaction UDP-N-acetyl-alpha-D-muramoyl-L-alanyl-gamma-D-glutamyl-meso-2,6-diaminopimeloyl-D-alanyl-D-alanine + di-trans,octa-cis-undecaprenyl phosphate = di-trans,octa-cis-undecaprenyl diphospho-N-acetyl-alpha-D-muramoyl-L-alanyl-D-glutamyl-meso-2,6-diaminopimeloyl-D-alanyl-D-alanine + UMP. It participates in cell wall biogenesis; peptidoglycan biosynthesis. In terms of biological role, catalyzes the initial step of the lipid cycle reactions in the biosynthesis of the cell wall peptidoglycan: transfers peptidoglycan precursor phospho-MurNAc-pentapeptide from UDP-MurNAc-pentapeptide onto the lipid carrier undecaprenyl phosphate, yielding undecaprenyl-pyrophosphoryl-MurNAc-pentapeptide, known as lipid I. The sequence is that of Phospho-N-acetylmuramoyl-pentapeptide-transferase from Protochlamydia amoebophila (strain UWE25).